The chain runs to 435 residues: Nuclear distribution protein nudF 2 (435 aa).

Positions 9–41 (QAEELHKSIIAYLSANGLPETTAILRKELGVTE) constitute a LisH domain. 8 WD repeats span residues 86-125 (SHRD…LEVT), 128-171 (GHTR…KNIR), 175-214 (GHDH…CVKT), 217-256 (GHTG…ENKL), 280-320 (APLA…LMTL), 322-361 (GHDN…KCVK), 366-396 (THGG…VRQI), and 397-434 (PDVA…QIFA).

It belongs to the WD repeat LIS1/nudF family. In terms of assembly, self-associates. Interacts with nudE and dynein.

The protein resides in the cytoplasm. It localises to the cytoskeleton. Its subcellular location is the spindle pole. Functionally, positively regulates the activity of the minus-end directed microtubule motor protein dynein. May enhance dynein-mediated microtubule sliding by targeting dynein to the microtubule plus end. Required for nuclear migration during vegetative growth as well as development. Required for retrograde early endosome (EE) transport from the hyphal tip. Required for localization of dynein to the mitotic spindle poles. Recruits additional proteins to the dynein complex at SPBs. This is Nuclear distribution protein nudF 2 from Aspergillus clavatus (strain ATCC 1007 / CBS 513.65 / DSM 816 / NCTC 3887 / NRRL 1 / QM 1276 / 107).